Reading from the N-terminus, the 69-residue chain is Large ribosomal subunit protein uL29 (69 aa).

This sequence belongs to the universal ribosomal protein uL29 family.

The sequence is that of Large ribosomal subunit protein uL29 from Thermoanaerobacter pseudethanolicus (strain ATCC 33223 / 39E) (Clostridium thermohydrosulfuricum).